The primary structure comprises 106 residues: Guanylate cyclase activator 2B (106 aa).

The N-terminal stretch at 1–21 (MSRSQLWAAVVLLLLLQSAQG) is a signal peptide. The propeptide occupies 22 to 91 (VYIKYHGFQV…STFKALRTIA (70 aa)). 3 disulfides stabilise this stretch: Cys-62/Cys-75, Cys-95/Cys-103, and Cys-98/Cys-106.

It belongs to the guanylin family. In terms of tissue distribution, localized predominantly in intestinal villi and the corticomedullary junction of the kidney.

Its subcellular location is the secreted. Functionally, endogenous activator of intestinal guanylate cyclase. It stimulates this enzyme through the same receptor binding region as the heat-stable enterotoxins. May be a potent physiological regulator of intestinal fluid and electrolyte transport. May be an autocrine/paracrine regulator of intestinal salt and water transport. This is Guanylate cyclase activator 2B (Guca2b) from Mus musculus (Mouse).